The chain runs to 230 residues: Ribose-5-phosphate isomerase A (230 aa).

Residues 32–35 (TGST), 85–88 (DGAD), and 98–101 (KGGG) each bind substrate. The active-site Proton acceptor is the Glu-107. Position 125 (Lys-125) interacts with substrate.

Belongs to the ribose 5-phosphate isomerase family. As to quaternary structure, homodimer.

The catalysed reaction is aldehydo-D-ribose 5-phosphate = D-ribulose 5-phosphate. It functions in the pathway carbohydrate degradation; pentose phosphate pathway; D-ribose 5-phosphate from D-ribulose 5-phosphate (non-oxidative stage): step 1/1. In terms of biological role, catalyzes the reversible conversion of ribose-5-phosphate to ribulose 5-phosphate. The chain is Ribose-5-phosphate isomerase A from Burkholderia ambifaria (strain ATCC BAA-244 / DSM 16087 / CCUG 44356 / LMG 19182 / AMMD) (Burkholderia cepacia (strain AMMD)).